Consider the following 101-residue polypeptide: Small ribosomal subunit protein bS18c (101 aa).

Residues 1 to 19 (MDKSKQLFRKSKGSFRRRL) are compositionally biased toward basic residues. The segment at 1–23 (MDKSKQLFRKSKGSFRRRLPPIG) is disordered.

This sequence belongs to the bacterial ribosomal protein bS18 family. In terms of assembly, part of the 30S ribosomal subunit.

Its subcellular location is the plastid. The protein resides in the chloroplast. This chain is Small ribosomal subunit protein bS18c, found in Acorus gramineus (Dwarf sweet flag).